A 189-amino-acid polypeptide reads, in one-letter code: MAIKLIVGLRNPGSAYEQTRHNAGAWLVTALAQRHNSHFKIDKKMQAELTEIDINNHPCRLVLPLSFMNHSGQTTRIISQFYKIEPGEILIVHDELDLPVGRIKLKTGGGHGGHNGLRDITAQLGTGVFHRLRIGIGHPGHKDLVHQYVLSRPSMHDRQQIYDAIDRGIAIIPIVLSGDMARAMNQVNA.

Residue Tyr16 coordinates tRNA. The active-site Proton acceptor is His21. Phe67, Asn69, and Asn115 together coordinate tRNA.

Belongs to the PTH family. In terms of assembly, monomer.

It is found in the cytoplasm. It catalyses the reaction an N-acyl-L-alpha-aminoacyl-tRNA + H2O = an N-acyl-L-amino acid + a tRNA + H(+). Functionally, hydrolyzes ribosome-free peptidyl-tRNAs (with 1 or more amino acids incorporated), which drop off the ribosome during protein synthesis, or as a result of ribosome stalling. Its function is as follows. Catalyzes the release of premature peptidyl moieties from peptidyl-tRNA molecules trapped in stalled 50S ribosomal subunits, and thus maintains levels of free tRNAs and 50S ribosomes. This chain is Peptidyl-tRNA hydrolase, found in Legionella pneumophila (strain Corby).